Consider the following 219-residue polypeptide: Large ribosomal subunit protein uL3 (219 aa).

The protein belongs to the universal ribosomal protein uL3 family. In terms of assembly, part of the 50S ribosomal subunit. Forms a cluster with proteins L14 and L19.

Its function is as follows. One of the primary rRNA binding proteins, it binds directly near the 3'-end of the 23S rRNA, where it nucleates assembly of the 50S subunit. This is Large ribosomal subunit protein uL3 from Salinispora arenicola (strain CNS-205).